The following is a 310-amino-acid chain: Methionyl-tRNA formyltransferase (310 aa).

109–112 (SLLP) serves as a coordination point for (6S)-5,6,7,8-tetrahydrofolate.

Belongs to the Fmt family.

It carries out the reaction L-methionyl-tRNA(fMet) + (6R)-10-formyltetrahydrofolate = N-formyl-L-methionyl-tRNA(fMet) + (6S)-5,6,7,8-tetrahydrofolate + H(+). Functionally, attaches a formyl group to the free amino group of methionyl-tRNA(fMet). The formyl group appears to play a dual role in the initiator identity of N-formylmethionyl-tRNA by promoting its recognition by IF2 and preventing the misappropriation of this tRNA by the elongation apparatus. This is Methionyl-tRNA formyltransferase from Chloroflexus aurantiacus (strain ATCC 29366 / DSM 635 / J-10-fl).